A 648-amino-acid polypeptide reads, in one-letter code: MPNIAILNQETIDKIAAGEVVERPCSVVKELVENAIDAGSTAITVEIKEGGISFIRITDNGCGIERDQVAVAFYRHSTSKIRSAEDLLTVKSLGFRGEALSSISAVARVELITKTYDELTGTRYVIEGSKELSNEEIGAPDGTTFIVKDLFYNVPARRKFLKTAQTEGSYISDMVEKLALSHPDISFKFINNNQTKLHTSGNGNRKDIIYHIFGREISSSLLEVKHECEYFKVEGFIGKPVITRGNRNYENYFINGRYVKSNILSRAIEEAYKSFLMQHQYPFTVLYFTFFSELDVNVHPTKMELRFDNNNEIYVELCDTIYAILAHKEMIPEVPVDSTPAPKKIVHEYKEPIPEPFEKRRINEVRAAESRSVYGQSVTATVKSSTVKGPAVNEPLTENTLNQQKVKTSASTPVVHTGNSVEPKPETSTAYEPAHVVTGTQQTLGDYDKVFLTESAKKQFSIIGQLFKTYWLIEFEDKLYIIDQHAAHEKVLYEKTMARLANKDFTSQRISPPIVMTLDARECEMLEKYRPQIEQFGYEVEHFGGKEYMISAIPDNLFNIDMKDLFIEMLDDFSNATGRQTPDIITEKVASMSCKAAVKGNDKLTLPEINKLIDELLSLDNPYNCPHGRPTIISMSKYEIEKKFKRIV.

A disordered region spans residues 385 to 430 (STVKGPAVNEPLTENTLNQQKVKTSASTPVVHTGNSVEPKPETSTA). Residues 396–430 (LTENTLNQQKVKTSASTPVVHTGNSVEPKPETSTA) show a composition bias toward polar residues.

This sequence belongs to the DNA mismatch repair MutL/HexB family.

In terms of biological role, this protein is involved in the repair of mismatches in DNA. It is required for dam-dependent methyl-directed DNA mismatch repair. May act as a 'molecular matchmaker', a protein that promotes the formation of a stable complex between two or more DNA-binding proteins in an ATP-dependent manner without itself being part of a final effector complex. The protein is DNA mismatch repair protein MutL of Agathobacter rectalis (strain ATCC 33656 / DSM 3377 / JCM 17463 / KCTC 5835 / VPI 0990) (Eubacterium rectale).